Consider the following 461-residue polypeptide: MAQKLYAGAKLRELRVKLGLTQKVFAERLGASLPYLNQMENNHRPVSATVVLALAQEFGVDVTKLTTSEAERIVTDMREALADPVFTDSPPLADLRLVASNAPAFARAFLDLHRAYRQTHERLASLDEALGRDEADLRPSPWEEVRDFFHYCDNYLDAVDRAAEHYAAPGGVRRDVFSAAMETLTRAGLDLQISDMPAIRSREGNALRLSARAAAPTQRFQLLHQVALLTQNDLLEATLDLARFQTAEAREIAKIGLANYFAGAALLPYRPFLQAAAETRHDLERLADLFGASIEQVAHRLSTLQRPGAKGVPFFFVRVDQAGTITKRHSATRFQFARFGGACPLWNVHRAFETPGRFLRQLAQTPDGVRYLLLARDVSKPGGSFTAPVRRYAIGLGCEVQHADALVYADGLDLKGSFEPIGISCRICDRQECHQRSVPPLEKRLRVDPDRRGLLPYEIVD.

Residues 11-65 enclose the HTH cro/C1-type domain; it reads LRELRVKLGLTQKVFAERLGASLPYLNQMENNHRPVSATVVLALAQEFGVDVTKL. A DNA-binding region (H-T-H motif) is located at residues 22 to 41; sequence QKVFAERLGASLPYLNQMEN.

It belongs to the short-chain fatty acyl-CoA assimilation regulator (ScfR) family.

In terms of biological role, transcriptional regulator that controls propionyl-CoA assimilation through the methylmalonyl-CoA pathway via regulation of pccB expression. This is Propionyl-CoA carboxylase regulator from Cereibacter sphaeroides (strain ATCC 17023 / DSM 158 / JCM 6121 / CCUG 31486 / LMG 2827 / NBRC 12203 / NCIMB 8253 / ATH 2.4.1.) (Rhodobacter sphaeroides).